The chain runs to 142 residues: Large ribosomal subunit protein uL13 (142 aa).

It belongs to the universal ribosomal protein uL13 family. Part of the 50S ribosomal subunit.

This protein is one of the early assembly proteins of the 50S ribosomal subunit, although it is not seen to bind rRNA by itself. It is important during the early stages of 50S assembly. The polypeptide is Large ribosomal subunit protein uL13 (Lachnospira eligens (strain ATCC 27750 / DSM 3376 / VPI C15-48 / C15-B4) (Eubacterium eligens)).